Consider the following 425-residue polypeptide: Voltage-dependent calcium channel gamma-8 subunit (425 aa).

A run of 4 helical transmembrane segments spans residues 19 to 39, 129 to 149, 158 to 178, and 208 to 228; these read VQVL…TIAI, SIFP…VAAS, IILG…IGVI, and FGGL…NIYI. A phosphoserine mark is found at S252 and S255. Residues 272-304 form a disordered region; it reads RRSRSSSRSSEPSPSRDASPGGPGGPGFASTDI. Residues 277 to 287 are compositionally biased toward low complexity; the sequence is SSRSSEPSPSR. A helical membrane pass occupies residues 318 to 338; the sequence is VAAGLAGAGGGGGGAVGAFGG. Residues 343-354 are compositionally biased toward gly residues; that stretch reads AGGGGGGGGGAG. Disordered regions lie at residues 343-365 and 377-425; these read AGGG…ASGF and GGGV…TTPV. Over residues 387–401 the composition is skewed to pro residues; it reads PPAPPAPAPPAPSAP. Residues 412-425 are compositionally biased toward polar residues; that stretch reads ASNTNTLNRKTTPV.

This sequence belongs to the PMP-22/EMP/MP20 family. CACNG subfamily. In terms of assembly, interacts with CACNA1C. Identified in a complex with the L-type calcium channel subunits CACNA1C, CACNA2D1 and either CACNB1 or CACNB2. Acts as an auxiliary subunit for AMPA-selective glutamate receptors (AMPARs). Found in a complex with GRIA1, GRIA2, GRIA3, GRIA4, CNIH2, CNIH3, CACNG2, CACNG3, CACNG4, CACNG5 and CACNG7. Interacts with CNIH2. Found in a complex with GRIA1, GRIA2, GRIA3, GRIA4, DLG4 and CNIH2. Post-translationally, palmitoylated. Probably palmitoylated by ZDHHC3 and ZDHHC7. Detected in heart left ventricle.

It localises to the cell membrane. Its subcellular location is the postsynaptic density membrane. Functionally, regulates the activity of L-type calcium channels that contain CACNA1C as pore-forming subunit. Regulates the trafficking and gating properties of AMPA-selective glutamate receptors (AMPARs). Promotes their targeting to the cell membrane and synapses and modulates their gating properties by slowing their rates of activation, deactivation and desensitization and by mediating their resensitization. Does not show subunit-specific AMPA receptor regulation and regulates all AMPAR subunits. The chain is Voltage-dependent calcium channel gamma-8 subunit from Homo sapiens (Human).